The following is a 364-amino-acid chain: Chorismate synthase (364 aa).

Arg47 lines the NADP(+) pocket. FMN-binding positions include 124–126 (RGS), 240–241 (NA), Gly284, 299–303 (KPTPS), and Arg326.

It belongs to the chorismate synthase family. The cofactor is FMNH2.

It carries out the reaction 5-O-(1-carboxyvinyl)-3-phosphoshikimate = chorismate + phosphate. It participates in metabolic intermediate biosynthesis; chorismate biosynthesis; chorismate from D-erythrose 4-phosphate and phosphoenolpyruvate: step 7/7. Catalyzes the anti-1,4-elimination of the C-3 phosphate and the C-6 proR hydrogen from 5-enolpyruvylshikimate-3-phosphate (EPSP) to yield chorismate, which is the branch point compound that serves as the starting substrate for the three terminal pathways of aromatic amino acid biosynthesis. This reaction introduces a second double bond into the aromatic ring system. The chain is Chorismate synthase from Methanobrevibacter smithii (strain ATCC 35061 / DSM 861 / OCM 144 / PS).